The sequence spans 394 residues: Chaperone protein DnaJ (394 aa).

A J domain is found at 6 to 71 (DYYEVLEVTK…DKRARYDQFG (66 aa)). A CR-type zinc finger spans residues 152–234 (GVEKKFKLKK…CGGEGIEYGE (83 aa)). Residues C165, C168, C182, C185, C208, C211, C222, and C225 each coordinate Zn(2+). CXXCXGXG motif repeat units lie at residues 165–172 (CSHCHGTG), 182–189 (CPTCKGSG), 208–215 (CPTCNGEG), and 222–229 (CKVCGGEG).

This sequence belongs to the DnaJ family. As to quaternary structure, homodimer. The cofactor is Zn(2+).

Its subcellular location is the cytoplasm. Functionally, participates actively in the response to hyperosmotic and heat shock by preventing the aggregation of stress-denatured proteins and by disaggregating proteins, also in an autonomous, DnaK-independent fashion. Unfolded proteins bind initially to DnaJ; upon interaction with the DnaJ-bound protein, DnaK hydrolyzes its bound ATP, resulting in the formation of a stable complex. GrpE releases ADP from DnaK; ATP binding to DnaK triggers the release of the substrate protein, thus completing the reaction cycle. Several rounds of ATP-dependent interactions between DnaJ, DnaK and GrpE are required for fully efficient folding. Also involved, together with DnaK and GrpE, in the DNA replication of plasmids through activation of initiation proteins. The polypeptide is Chaperone protein DnaJ (Bacteroides fragilis (strain YCH46)).